A 225-amino-acid polypeptide reads, in one-letter code: U2 small nuclear ribonucleoprotein B'' (225 aa).

The RRM 1 domain maps to 7-86; that stretch reads HTIYINNMND…KPMRIQYAKT (80 aa). The interval 99 to 145 is disordered; the sequence is ADKEKKKEKKKAKTVEQTATTTNKKPGQGTPNSANTQGNSTPNPQVP. The residue at position 111 (K111) is an N6-acetyllysine; alternate. Residue K111 forms a Glycyl lysine isopeptide (Lys-Gly) (interchain with G-Cter in SUMO2); alternate linkage. The span at 113 to 123 shows a compositional bias: low complexity; it reads VEQTATTTNKK. The span at 127 to 141 shows a compositional bias: polar residues; it reads GTPNSANTQGNSTPN. Residue Y151 is modified to Phosphotyrosine. In terms of domain architecture, RRM 2 spans 151 to 225; it reads YILFLNNLPE…HAMKITYAKK (75 aa).

This sequence belongs to the RRM U1 A/B'' family. Identified in the spliceosome B complex. Identified in the spliceosome C complex. Present in a spliceosome complex assembled in vitro, and composed of SNRPB2, HPRP8BP and CRNKL1. Contributes to the binding of stem loop IV of U2 snRNA with SNRPP1.

It is found in the nucleus. Involved in pre-mRNA splicing as component of the spliceosome. Associated with sn-RNP U2, where it contributes to the binding of stem loop IV of U2 snRNA. This Homo sapiens (Human) protein is U2 small nuclear ribonucleoprotein B'' (SNRPB2).